A 914-amino-acid chain; its full sequence is Probable UDP-N-acetylglucosamine--peptide N-acetylglucosaminyltransferase SPINDLY (914 aa).

The interval 1 to 39 (MVGLEDDTERERSPVVENGFSNGSRSSSSSAGVLSPSRK) is disordered. Positions 19-37 (GFSNGSRSSSSSAGVLSPS) are enriched in low complexity. Residue S35 is modified to Phosphoserine. TPR repeat units follow at residues 43–76 (GNDT…DSKN), 77–110 (VEAH…DPHN), 112–144 (CALT…DASY), 152–185 (AIVL…DPHY), 186–219 (APAY…RPMY), 220–253 (AEAY…SPNF), 261–294 (AIAL…NWHY), 295–328 (ADAM…NPHC), 329–362 (AEAC…KPNF), 364–396 (QSLN…NPTY), and 397–430 (AEAF…DPDS). Residues 431–914 (RNAGQNRLLA…QLSKRMDSTS (484 aa)) form a catalytic region region. The disordered stretch occupies residues 866–914 (PLISKDLGPSRVSVTGEATPSLKANGSAPVPSSLPTQSPQLSKRMDSTS). Over residues 877 to 889 (VSVTGEATPSLKA) the composition is skewed to polar residues. A compositionally biased stretch (low complexity) spans 894–907 (PVPSSLPTQSPQLS).

This sequence belongs to the glycosyltransferase 41 family. O-GlcNAc transferase subfamily. Homomultimer; via its TPR repeats. Interacts with GI. Interacts with TCP14 and TCP15. Interacts (via N-terminus) with APRR5. Interacts with CPN20. As to expression, widely expressed. Present throughout the plant (at protein level).

It localises to the cytoplasm. The protein resides in the nucleus. It catalyses the reaction L-seryl-[protein] + UDP-N-acetyl-alpha-D-glucosamine = 3-O-(N-acetyl-beta-D-glucosaminyl)-L-seryl-[protein] + UDP + H(+). The catalysed reaction is L-threonyl-[protein] + UDP-N-acetyl-alpha-D-glucosamine = 3-O-(N-acetyl-beta-D-glucosaminyl)-L-threonyl-[protein] + UDP + H(+). It carries out the reaction L-seryl-[protein] + GDP-beta-L-fucose = 3-O-(alpha-L-fucosyl)-L-seryl-[protein] + GDP + H(+). The enzyme catalyses L-threonyl-[protein] + GDP-beta-L-fucose = 3-O-(alpha-L-fucosyl)-L-threonyl-[protein] + GDP + H(+). It participates in protein modification; protein glycosylation. Probable O-linked N-acetylglucosamine transferase (OGT) involved in various processes such as gibberellin (GA) signaling pathway and circadian clock. OGTs catalyze the addition of nucleotide-activated sugars directly onto the polypeptide through O-glycosidic linkage with the hydroxyl of serine or threonine. Probably acts by adding O-linked sugars to yet unknown proteins. Acts as a repressor of GA signaling pathway to inhibit hypocotyl elongation. Functions with GIGANTEA (GI) in pathways controlling flowering, circadian cotyledon movements and hypocotyl elongation. Acts as a light-regulated promoter of elongation via its interaction with GI. Acts as an activator of cytokinin signaling. Required with SEC for gamete and seed development. Its OGT activity has been proved in vitro but not in vivo. Possesses O-fucosyltransferase activity on specific serine and threonine residues. Mediates O-fucosylation of the DELLA protein RGA, a repressor of the GA signaling pathway. O-fucosylation enhances RGA activity by promoting RGA binding to key transcription factors in brassinosteroid and light-signaling pathways. Regulates root hair patterning upstream of the transcription factor WER, independently of DELLA proteins and GA signaling. Involved in abscisic acid (ABA) signaling partly through functional ABAR. Mediates O-fucosylation of CPN20 that may depress ABA responses during seed germination and seedling development. Involved in the modulation of the pace of the circadian clock by mediating O-fucosylation of APRR5, one of the core circadian clock components. O-fucosylation promotes APRR5 proteolysis. The chain is Probable UDP-N-acetylglucosamine--peptide N-acetylglucosaminyltransferase SPINDLY from Arabidopsis thaliana (Mouse-ear cress).